We begin with the raw amino-acid sequence, 484 residues long: UDP-N-acetylmuramoyl-L-alanyl-D-glutamate--2,6-diaminopimelate ligase (484 aa).

Serine 29 lines the UDP-N-acetyl-alpha-D-muramoyl-L-alanyl-D-glutamate pocket. 108–114 (GTSGKTS) is an ATP binding site. UDP-N-acetyl-alpha-D-muramoyl-L-alanyl-D-glutamate contacts are provided by residues 150–151 (TT), serine 177, glutamine 183, and arginine 185. Position 217 is an N6-carboxylysine (lysine 217). Meso-2,6-diaminopimelate-binding positions include arginine 381, 405–408 (DNPR), glycine 453, and glutamate 457. The short motif at 405–408 (DNPR) is the Meso-diaminopimelate recognition motif element.

The protein belongs to the MurCDEF family. MurE subfamily. Mg(2+) serves as cofactor. In terms of processing, carboxylation is probably crucial for Mg(2+) binding and, consequently, for the gamma-phosphate positioning of ATP.

The protein resides in the cytoplasm. It catalyses the reaction UDP-N-acetyl-alpha-D-muramoyl-L-alanyl-D-glutamate + meso-2,6-diaminopimelate + ATP = UDP-N-acetyl-alpha-D-muramoyl-L-alanyl-gamma-D-glutamyl-meso-2,6-diaminopimelate + ADP + phosphate + H(+). It functions in the pathway cell wall biogenesis; peptidoglycan biosynthesis. Catalyzes the addition of meso-diaminopimelic acid to the nucleotide precursor UDP-N-acetylmuramoyl-L-alanyl-D-glutamate (UMAG) in the biosynthesis of bacterial cell-wall peptidoglycan. The sequence is that of UDP-N-acetylmuramoyl-L-alanyl-D-glutamate--2,6-diaminopimelate ligase from Mesorhizobium japonicum (strain LMG 29417 / CECT 9101 / MAFF 303099) (Mesorhizobium loti (strain MAFF 303099)).